The sequence spans 427 residues: UPF0229 protein YeaH (427 aa).

The span at 79-90 (NDHFVQNDRIER) shows a compositional bias: basic and acidic residues. A disordered region spans residues 79–110 (NDHFVQNDRIERPQGGGGGSGSGQGQASQDGE). Gly residues predominate over residues 92-102 (QGGGGGSGSGQ).

The protein belongs to the UPF0229 family.

In Escherichia coli O9:H4 (strain HS), this protein is UPF0229 protein YeaH.